A 1223-amino-acid chain; its full sequence is DNA-directed RNA polymerase subunit beta'' (1223 aa).

Residues cysteine 233, cysteine 307, cysteine 314, and cysteine 317 each contribute to the Zn(2+) site.

It belongs to the RNA polymerase beta' chain family. RpoC2 subfamily. As to quaternary structure, in plastids the minimal PEP RNA polymerase catalytic core is composed of four subunits: alpha, beta, beta', and beta''. When a (nuclear-encoded) sigma factor is associated with the core the holoenzyme is formed, which can initiate transcription. Zn(2+) serves as cofactor.

It is found in the plastid. The protein localises to the chloroplast. It catalyses the reaction RNA(n) + a ribonucleoside 5'-triphosphate = RNA(n+1) + diphosphate. Its function is as follows. DNA-dependent RNA polymerase catalyzes the transcription of DNA into RNA using the four ribonucleoside triphosphates as substrates. The chain is DNA-directed RNA polymerase subunit beta'' from Mesostigma viride (Green alga).